Here is a 955-residue protein sequence, read N- to C-terminus: uncharacterized protein (955 aa).

One can recognise an Importin N-terminal domain in the interval 23–90 (ANNYLEEFQK…RNSLLQLFLA (68 aa)).

This is an uncharacterized protein from Schizosaccharomyces pombe (strain 972 / ATCC 24843) (Fission yeast).